The sequence spans 94 residues: Large ribosomal subunit protein uL23 (94 aa).

The protein belongs to the universal ribosomal protein uL23 family. As to quaternary structure, part of the 50S ribosomal subunit. Contacts protein L29, and trigger factor when it is bound to the ribosome.

Functionally, one of the early assembly proteins it binds 23S rRNA. One of the proteins that surrounds the polypeptide exit tunnel on the outside of the ribosome. Forms the main docking site for trigger factor binding to the ribosome. This chain is Large ribosomal subunit protein uL23, found in Geobacter sp. (strain M21).